A 271-amino-acid polypeptide reads, in one-letter code: Putative phosphoenolpyruvate synthase regulatory protein (271 aa).

152–159 (GVSRCGKT) contributes to the ADP binding site.

This sequence belongs to the pyruvate, phosphate/water dikinase regulatory protein family. PSRP subfamily.

It catalyses the reaction [pyruvate, water dikinase] + ADP = [pyruvate, water dikinase]-phosphate + AMP + H(+). It carries out the reaction [pyruvate, water dikinase]-phosphate + phosphate + H(+) = [pyruvate, water dikinase] + diphosphate. Functionally, bifunctional serine/threonine kinase and phosphorylase involved in the regulation of the phosphoenolpyruvate synthase (PEPS) by catalyzing its phosphorylation/dephosphorylation. The polypeptide is Putative phosphoenolpyruvate synthase regulatory protein (Legionella pneumophila (strain Lens)).